Consider the following 122-residue polypeptide: Large ribosomal subunit protein uL18 (122 aa).

Residues 1–25 (MSQISRKQQTQKRHRRLRRHITGTS) form a disordered region. A compositionally biased stretch (basic residues) spans 9 to 21 (QTQKRHRRLRRHI).

Belongs to the universal ribosomal protein uL18 family. As to quaternary structure, part of the 50S ribosomal subunit; part of the 5S rRNA/L5/L18/L25 subcomplex. Contacts the 5S and 23S rRNAs.

Functionally, this is one of the proteins that bind and probably mediate the attachment of the 5S RNA into the large ribosomal subunit, where it forms part of the central protuberance. In Synechococcus sp. (strain CC9605), this protein is Large ribosomal subunit protein uL18.